Consider the following 179-residue polypeptide: ATP synthase subunit delta (179 aa).

The protein belongs to the ATPase delta chain family. In terms of assembly, F-type ATPases have 2 components, F(1) - the catalytic core - and F(0) - the membrane proton channel. F(1) has five subunits: alpha(3), beta(3), gamma(1), delta(1), epsilon(1). F(0) has three main subunits: a(1), b(2) and c(10-14). The alpha and beta chains form an alternating ring which encloses part of the gamma chain. F(1) is attached to F(0) by a central stalk formed by the gamma and epsilon chains, while a peripheral stalk is formed by the delta and b chains.

Its subcellular location is the cell membrane. In terms of biological role, f(1)F(0) ATP synthase produces ATP from ADP in the presence of a proton or sodium gradient. F-type ATPases consist of two structural domains, F(1) containing the extramembraneous catalytic core and F(0) containing the membrane proton channel, linked together by a central stalk and a peripheral stalk. During catalysis, ATP synthesis in the catalytic domain of F(1) is coupled via a rotary mechanism of the central stalk subunits to proton translocation. Its function is as follows. This protein is part of the stalk that links CF(0) to CF(1). It either transmits conformational changes from CF(0) to CF(1) or is implicated in proton conduction. This Staphylococcus carnosus (strain TM300) protein is ATP synthase subunit delta.